Consider the following 107-residue polypeptide: Auxin-responsive protein SAUR50 (107 aa).

This sequence belongs to the ARG7 family. As to quaternary structure, interacts with BZR1. Expressed in cotyledons, leaves, flowers and siliques.

The protein localises to the cell membrane. Provide a mechanistic link between auxin and plasma membrane H(+)-ATPases (PM H(+)-ATPases, e.g. AHA1 and AHA2), and triggers PM H(+)-ATPases activity by promoting phosphorylation of their C-terminal autoinhibitory domain as a result of PP2C-D subfamily of type 2C phosphatases inhibition, thus leading to the acidification of the apoplast and the facilitation of solutes and water uptake to drive cell expansion. Triggers plant growth probably by promoting cell elongation. Regulates branch angles and bending. Effector of hormonal and environmental signals in plant growth. The chain is Auxin-responsive protein SAUR50 from Arabidopsis thaliana (Mouse-ear cress).